The primary structure comprises 287 residues: Nucleotide-binding protein Hhal_2130 (287 aa).

11–18 contributes to the ATP binding site; it reads GLSGSGKS. A GTP-binding site is contributed by 63–66; the sequence is DARN.

Belongs to the RapZ-like family.

In terms of biological role, displays ATPase and GTPase activities. The protein is Nucleotide-binding protein Hhal_2130 of Halorhodospira halophila (strain DSM 244 / SL1) (Ectothiorhodospira halophila (strain DSM 244 / SL1)).